We begin with the raw amino-acid sequence, 239 residues long: MKLLALSLASLASAATITRRADFCGQWDTATAGNFIVYNNLWGQDNADSGSQCTGVDSANGNSVSWHTTWSWSGGSSSVKSYANAAYQFTATQLSSLSSIPSTWEWQYSTTDVVANVAYDLFTSSSIGGDSEYEIMIWLAALGGAGPISSTGSSIATVTLGGVTWNLYSGPNGSMQVYSFVASSTTESFSADLMDFINYLVENQGLSNSQYLTHVQAGTEPFTGSDATLTVSSYSVSVS.

Positions 1–14 are cleaved as a signal peptide; that stretch reads MKLLALSLASLASA. Asn172 carries an N-linked (GlcNAc...) asparagine glycan.

It belongs to the glycosyl hydrolase 12 (cellulase H) family.

It localises to the secreted. The catalysed reaction is xyloglucan + H2O = xyloglucan oligosaccharides.. Catalyzes endohydrolysis of 1,4-beta-D-glucosidic linkages in xyloglucan with retention of the beta-configuration of the glycosyl residues. Specific for xyloglucan and does not hydrolyze other cell wall components. Active against tamarind xyloglucan. The polypeptide is Xyloglucan-specific endo-beta-1,4-glucanase A (xgeA) (Emericella nidulans (strain FGSC A4 / ATCC 38163 / CBS 112.46 / NRRL 194 / M139) (Aspergillus nidulans)).